The primary structure comprises 352 residues: Peptide chain release factor 1 (352 aa).

N5-methylglutamine is present on Q233. Positions 288–309 (NAKDRKEQVGSGDRSERIRTYN) are disordered. The span at 289–306 (AKDRKEQVGSGDRSERIR) shows a compositional bias: basic and acidic residues.

Belongs to the prokaryotic/mitochondrial release factor family. Post-translationally, methylated by PrmC. Methylation increases the termination efficiency of RF1.

It localises to the cytoplasm. In terms of biological role, peptide chain release factor 1 directs the termination of translation in response to the peptide chain termination codons UAG and UAA. The protein is Peptide chain release factor 1 (prfA) of Helicobacter pylori (strain ATCC 700392 / 26695) (Campylobacter pylori).